The chain runs to 132 residues: Small ribosomal subunit protein uS8 (132 aa).

The protein belongs to the universal ribosomal protein uS8 family. In terms of assembly, part of the 30S ribosomal subunit. Contacts proteins S5 and S12.

Its function is as follows. One of the primary rRNA binding proteins, it binds directly to 16S rRNA central domain where it helps coordinate assembly of the platform of the 30S subunit. The protein is Small ribosomal subunit protein uS8 of Xanthobacter autotrophicus (strain ATCC BAA-1158 / Py2).